Consider the following 345-residue polypeptide: L-threonine 3-dehydrogenase (345 aa).

C42 contacts Zn(2+). Active-site charge relay system residues include T44 and H47. Positions 67, 68, 97, 100, 103, and 111 each coordinate Zn(2+). NAD(+) contacts are provided by residues I179, D199, R204, 266–268 (LGI), and 290–291 (IY).

The protein belongs to the zinc-containing alcohol dehydrogenase family. Homotetramer. Zn(2+) serves as cofactor.

Its subcellular location is the cytoplasm. It carries out the reaction L-threonine + NAD(+) = (2S)-2-amino-3-oxobutanoate + NADH + H(+). It participates in amino-acid degradation; L-threonine degradation via oxydo-reductase pathway; glycine from L-threonine: step 1/2. Functionally, catalyzes the NAD(+)-dependent oxidation of L-threonine to 2-amino-3-ketobutyrate. The sequence is that of L-threonine 3-dehydrogenase from Rhizobium johnstonii (strain DSM 114642 / LMG 32736 / 3841) (Rhizobium leguminosarum bv. viciae).